The sequence spans 297 residues: Large ribosomal subunit protein uL18 (297 aa).

At G2 the chain carries N-acetylglycine. K5 and K48 each carry N6-acetyllysine. A Phosphoserine modification is found at S185. N6-acetyllysine; alternate is present on K220. K220 participates in a covalent cross-link: Glycyl lysine isopeptide (Lys-Gly) (interchain with G-Cter in SUMO1); alternate. A Glycyl lysine isopeptide (Lys-Gly) (interchain with G-Cter in SUMO2); alternate cross-link involves residue K220. T232 is subject to Phosphothreonine. The tract at residues 253–297 is disordered; it reads YEKKPKREVKKKRWNRPKMSLAQKKDRVAQKKASFLRAQERAAES. Over residues 258–268 the composition is skewed to basic residues; that stretch reads KREVKKKRWNR. The residue at position 272 (S272) is a Phosphoserine.

It belongs to the universal ribosomal protein uL18 family. Component of the large ribosomal subunit (LSU). Part of the 5S RNP complex, which is a LSU subcomplex composed of the 5S RNA, RPL5 and RPL11. Component of a hexameric 5S RNP precursor complex, composed of 5S RNA, RRS1, RPF2/BXDC1, RPL5, RPL11 and HEATR3; this complex acts as a precursor for ribosome assembly. Interacts with NVL in an ATP-dependent manner. Interacts with RRP1B. Interacts with IPO5, IPO7 and KPNB1; these interactions may be involved in RPL5 nuclear import for the assembly of ribosomal subunits. Interacts with RRP1B.

The protein resides in the cytoplasm. It localises to the nucleus. Its subcellular location is the nucleolus. Component of the ribosome, a large ribonucleoprotein complex responsible for the synthesis of proteins in the cell. The small ribosomal subunit (SSU) binds messenger RNAs (mRNAs) and translates the encoded message by selecting cognate aminoacyl-transfer RNA (tRNA) molecules. The large subunit (LSU) contains the ribosomal catalytic site termed the peptidyl transferase center (PTC), which catalyzes the formation of peptide bonds, thereby polymerizing the amino acids delivered by tRNAs into a polypeptide chain. The nascent polypeptides leave the ribosome through a tunnel in the LSU and interact with protein factors that function in enzymatic processing, targeting, and the membrane insertion of nascent chains at the exit of the ribosomal tunnel. As part of the 5S RNP/5S ribonucleoprotein particle it is an essential component of the LSU, required for its formation and the maturation of rRNAs. It also couples ribosome biogenesis to p53/TP53 activation. As part of the 5S RNP it accumulates in the nucleoplasm and inhibits MDM2, when ribosome biogenesis is perturbed, mediating the stabilization and the activation of TP53. This is Large ribosomal subunit protein uL18 (Rpl5) from Rattus norvegicus (Rat).